A 194-amino-acid polypeptide reads, in one-letter code: Holliday junction branch migration complex subunit RuvA (194 aa).

Residues 1-64 (MIGRLRGILA…EDSVSLYGFL (64 aa)) are domain I. The domain II stretch occupies residues 65–140 (REGERRLFRD…RAADFSSGAP (76 aa)). A flexible linker region spans residues 140-144 (PITGQ). The segment at 145–194 (LGPDAISEATVALQQLGYKPAEAARMARDAGAEGGEVATVIRKALQAALR) is domain III.

This sequence belongs to the RuvA family. Homotetramer. Forms an RuvA(8)-RuvB(12)-Holliday junction (HJ) complex. HJ DNA is sandwiched between 2 RuvA tetramers; dsDNA enters through RuvA and exits via RuvB. An RuvB hexamer assembles on each DNA strand where it exits the tetramer. Each RuvB hexamer is contacted by two RuvA subunits (via domain III) on 2 adjacent RuvB subunits; this complex drives branch migration. In the full resolvosome a probable DNA-RuvA(4)-RuvB(12)-RuvC(2) complex forms which resolves the HJ.

The protein resides in the cytoplasm. Functionally, the RuvA-RuvB-RuvC complex processes Holliday junction (HJ) DNA during genetic recombination and DNA repair, while the RuvA-RuvB complex plays an important role in the rescue of blocked DNA replication forks via replication fork reversal (RFR). RuvA specifically binds to HJ cruciform DNA, conferring on it an open structure. The RuvB hexamer acts as an ATP-dependent pump, pulling dsDNA into and through the RuvAB complex. HJ branch migration allows RuvC to scan DNA until it finds its consensus sequence, where it cleaves and resolves the cruciform DNA. This is Holliday junction branch migration complex subunit RuvA from Xanthomonas oryzae pv. oryzae (strain MAFF 311018).